The following is an 82-amino-acid chain: Putative membrane protein insertion efficiency factor (82 aa).

Belongs to the UPF0161 family.

Its subcellular location is the cell inner membrane. Could be involved in insertion of integral membrane proteins into the membrane. In Colwellia psychrerythraea (strain 34H / ATCC BAA-681) (Vibrio psychroerythus), this protein is Putative membrane protein insertion efficiency factor.